A 246-amino-acid polypeptide reads, in one-letter code: MAYLRSSFVFFLLAFVTYTYAATIEVRNNCPYTVWAASTPIGGGRRLDRGQTWVINAPRGTKMARIWGRTNCNFDGAGRGSCQTGDCGGVLQCTGWGKPPNTLAEYALDQFSNLDFWDISLVDGFNIPMTFAPTNPSGGKCHAIHCTANINGECPGSLRVPGGCNNPCTTFGGQQYCCTQGPCGPTDLSRFFKQRCPDAYSYPQDDPTSTFTCPSGSTNYRVVFCPNGVTSPNFPLEMPASDEEAK.

The first 21 residues, 1–21 (MAYLRSSFVFFLLAFVTYTYA), serve as a signal peptide directing secretion. Disulfide bonds link Cys30–Cys225, Cys72–Cys82, Cys87–Cys93, Cys141–Cys213, Cys146–Cys196, Cys154–Cys164, Cys168–Cys177, and Cys178–Cys183.

Belongs to the thaumatin family.

This Solanum commersonii (Commerson's wild potato) protein is Osmotin-like protein OSML13.